The following is a 381-amino-acid chain: Alkanesulfonate monooxygenase (381 aa).

This sequence belongs to the SsuD family. In terms of assembly, homotetramer.

It catalyses the reaction an alkanesulfonate + FMNH2 + O2 = an aldehyde + FMN + sulfite + H2O + 2 H(+). In terms of biological role, catalyzes the desulfonation of aliphatic sulfonates. This Escherichia coli O9:H4 (strain HS) protein is Alkanesulfonate monooxygenase.